The chain runs to 621 residues: Cyclic nucleotide-gated ion channel 11 (621 aa).

Residues 1 to 43 (MNLQRRKFVRLDSTGVDGKLKSVRGRLKKVYGKMKTLENWRKT) are Cytoplasmic-facing. A helical membrane pass occupies residues 44-64 (VLLACVVALAIDPLFLFIPLI). Over 65–76 (DSQRFCFTFDKT) the chain is Extracellular. A helical membrane pass occupies residues 77 to 97 (LVAVVCVIRTFIDTFYVIHII). Over 98 to 128 (YYLITETIAPRSQASLRGEIVVHSKATLKTR) the chain is Cytoplasmic. Residues 129 to 149 (LLFHFIVDIISVLPIPQVVVL) traverse the membrane as a helical segment. The Extracellular portion of the chain corresponds to 150 to 162 (TLIPLSASLVSER). The chain crosses the membrane as a helical span at residues 163–183 (ILKWIILSQYVPRIIRMYPLY). Residues 184–198 (KEVTRAFGTVAESKR) are Cytoplasmic-facing. Residues 199–219 (VGAALNFFLYMLHSYVCGAFW) form a helical membrane-spanning segment. Residues 220–329 (YLSSIERKST…QNLETSNSAG (110 aa)) are Extracellular-facing. A helical membrane pass occupies residues 330–350 (EIFFAIIICVSGLLLFAVLIG). At 351–621 (NVQKYLQSST…KLNLGAAIYA (271 aa)) the chain is on the cytoplasmic side. Residues 435-556 (LLQA…HSKQ) and aspartate 506 each bind a nucleoside 3',5'-cyclic phosphate. Residues 549–564 (YRRLHSKQLQHMFRFY) form a calmodulin-binding region. Positions 569–598 (QTWAACFIQAAWKRHCRRKLSKALREEEGK) constitute an IQ domain.

Belongs to the cyclic nucleotide-gated cation channel (TC 1.A.1.5) family. In terms of assembly, homotetramer or heterotetramer.

It is found in the cell membrane. In terms of biological role, putative cyclic nucleotide-gated ion channel. The polypeptide is Cyclic nucleotide-gated ion channel 11 (CNGC11) (Arabidopsis thaliana (Mouse-ear cress)).